Reading from the N-terminus, the 229-residue chain is Translin (229 aa).

Positions 86 to 90 (RFHEH) are DNA/RNA binding. Residues 177 to 198 (LDSGFRLLNLKNDSLRKRYDGL) form a leucine-zipper region.

This sequence belongs to the translin family. Ring-shaped heterooctamer of six TSN and two TSNAX subunits, DNA/RNA binding occurs inside the ring.

It localises to the cytoplasm. The protein localises to the nucleus. In terms of biological role, exhibits both single-stranded and double-stranded endoribonuclease activity. May act as an activator of RNA-induced silencing complex (RISC) by facilitating endonucleolytic cleavage of the siRNA passenger strand. Functionally, DNA-binding protein that specifically recognizes consensus sequences at the breakpoint junctions in chromosomal translocations, mostly involving immunoglobulin (Ig)/T-cell receptor gene segments. Seems to recognize single-stranded DNA ends generated by staggered breaks occurring at recombination hot spots. The chain is Translin (TSN) from Gallus gallus (Chicken).